The sequence spans 565 residues: NAD-dependent malic enzyme (565 aa).

Residue Y104 is the Proton donor of the active site. R157 lines the NAD(+) pocket. Catalysis depends on K175, which acts as the Proton acceptor. E246, D247, and D270 together coordinate a divalent metal cation. NAD(+) contacts are provided by D270 and N418.

It belongs to the malic enzymes family. As to quaternary structure, homotetramer. Requires Mg(2+) as cofactor. Mn(2+) is required as a cofactor.

It catalyses the reaction (S)-malate + NAD(+) = pyruvate + CO2 + NADH. The catalysed reaction is oxaloacetate + H(+) = pyruvate + CO2. The polypeptide is NAD-dependent malic enzyme (Escherichia coli O127:H6 (strain E2348/69 / EPEC)).